A 133-amino-acid chain; its full sequence is UPF0102 protein AB57_1130 (133 aa).

It belongs to the UPF0102 family.

This chain is UPF0102 protein AB57_1130, found in Acinetobacter baumannii (strain AB0057).